Here is a 70-residue protein sequence, read N- to C-terminus: Translation initiation factor IF-1 (70 aa).

Positions 1 to 70 (MKNDKLFLTG…LKLGRITQRK (70 aa)) constitute an S1-like domain.

This sequence belongs to the IF-1 family. As to quaternary structure, component of the 30S ribosomal translation pre-initiation complex which assembles on the 30S ribosome in the order IF-2 and IF-3, IF-1 and N-formylmethionyl-tRNA(fMet); mRNA recruitment can occur at any time during PIC assembly.

It localises to the cytoplasm. Functionally, one of the essential components for the initiation of protein synthesis. Stabilizes the binding of IF-2 and IF-3 on the 30S subunit to which N-formylmethionyl-tRNA(fMet) subsequently binds. Helps modulate mRNA selection, yielding the 30S pre-initiation complex (PIC). Upon addition of the 50S ribosomal subunit IF-1, IF-2 and IF-3 are released leaving the mature 70S translation initiation complex. The protein is Translation initiation factor IF-1 of Mycoplasma genitalium (strain ATCC 33530 / DSM 19775 / NCTC 10195 / G37) (Mycoplasmoides genitalium).